The chain runs to 251 residues: DNA repair protein RecO (251 aa).

This sequence belongs to the RecO family.

In terms of biological role, involved in DNA repair and RecF pathway recombination. This chain is DNA repair protein RecO, found in Lactococcus lactis subsp. cremoris (strain MG1363).